The chain runs to 547 residues: ATP synthase subunit beta, mitochondrial (547 aa).

The N-terminal 45 residues, 1–45 (MASRRLLSSFLRSSTRRSLRPSFSNPRPSFLTSYCSSPASILRRY), are a transit peptide targeting the mitochondrion. Low complexity predominate over residues 52–62 (KEPAASKPAGT). The interval 52-74 (KEPAASKPAGTAGTGKGTITDEK) is disordered. ATP is bound at residue 226-233 (GGDWVGKT).

Belongs to the ATPase alpha/beta chains family. F-type ATPases have 2 components, CF(1) - the catalytic core - and CF(0) - the membrane proton channel. CF(1) has five subunits: alpha(3), beta(3), gamma(1), delta(1), epsilon(1). CF(0) has three main subunits: a, b and c.

The protein localises to the mitochondrion. It is found in the mitochondrion inner membrane. It carries out the reaction ATP + H2O + 4 H(+)(in) = ADP + phosphate + 5 H(+)(out). Its function is as follows. Mitochondrial membrane ATP synthase (F(1)F(0) ATP synthase or Complex V) produces ATP from ADP in the presence of a proton gradient across the membrane which is generated by electron transport complexes of the respiratory chain. F-type ATPases consist of two structural domains, F(1) - containing the extramembraneous catalytic core, and F(0) - containing the membrane proton channel, linked together by a central stalk and a peripheral stalk. During catalysis, ATP synthesis in the catalytic domain of F(1) is coupled via a rotary mechanism of the central stalk subunits to proton translocation. Subunits alpha and beta form the catalytic core in F(1). Rotation of the central stalk against the surrounding alpha(3)beta(3) subunits leads to hydrolysis of ATP in three separate catalytic sites on the beta subunits. This Daucus carota (Wild carrot) protein is ATP synthase subunit beta, mitochondrial (ATPB).